Reading from the N-terminus, the 388-residue chain is Succinate--CoA ligase [ADP-forming] subunit beta (388 aa).

Residues 9 to 244 (KQLFARYGLP…HSQEDEREAH (236 aa)) form the ATP-grasp domain. Residues Lys-46, 53–55 (GRG), Glu-99, Thr-102, and Glu-107 each bind ATP. Mg(2+) contacts are provided by Asn-199 and Asp-213. Substrate contacts are provided by residues Asn-264 and 321-323 (GIV).

It belongs to the succinate/malate CoA ligase beta subunit family. In terms of assembly, heterotetramer of two alpha and two beta subunits. Mg(2+) is required as a cofactor.

The enzyme catalyses succinate + ATP + CoA = succinyl-CoA + ADP + phosphate. It catalyses the reaction GTP + succinate + CoA = succinyl-CoA + GDP + phosphate. The protein operates within carbohydrate metabolism; tricarboxylic acid cycle; succinate from succinyl-CoA (ligase route): step 1/1. Succinyl-CoA synthetase functions in the citric acid cycle (TCA), coupling the hydrolysis of succinyl-CoA to the synthesis of either ATP or GTP and thus represents the only step of substrate-level phosphorylation in the TCA. The beta subunit provides nucleotide specificity of the enzyme and binds the substrate succinate, while the binding sites for coenzyme A and phosphate are found in the alpha subunit. This chain is Succinate--CoA ligase [ADP-forming] subunit beta, found in Sodalis glossinidius (strain morsitans).